Consider the following 354-residue polypeptide: Myosin-binding protein H-like (354 aa).

Residues 1-47 (MEAATAPEVAAGSKLKVKEASPADAEPPQASPGQGAGSPTPQLLPPI) are disordered. At Ser38 the chain carries Phosphoserine. The region spanning 45–139 (PPIEEHPKIW…GGLEATATID (95 aa)) is the Ig-like C2-type 1 domain. The 91-residue stretch at 148-238 (PPQSIKLVDV…ETAPITTDLA (91 aa)) folds into the Fibronectin type-III domain. One can recognise an Ig-like C2-type 2 domain in the interval 261–345 (PKFTQPLADC…VNPLGEASVD (85 aa)). Residues Cys282 and Cys333 are joined by a disulfide bond. Arg321 is subject to Omega-N-methylarginine.

Belongs to the immunoglobulin superfamily. MyBP family. Expressed in heart, with higher expression in the atria. As to expression, expressed in left atrium and ventricle, arteria mammaria interna and skeletal muscle. In terms of tissue distribution, expressed specifically en the left atrium.

The protein localises to the cytoplasm. It is found in the myofibril. Its subcellular location is the sarcomere. Functionally, myosin-binding protein which plays a role in cardiac function. Seems to regulate conduction in the atria and ventricular conduction systems. In Homo sapiens (Human), this protein is Myosin-binding protein H-like.